We begin with the raw amino-acid sequence, 403 residues long: Phosphoserine phosphatase RsbP (403 aa).

The PAS domain occupies 1–42 (MDKQLNDAPCGFLALSEEGSIIAANRTLIKILDYEPEQVIGQ). The 212-residue stretch at 191–402 (QVQIDSYYNA…DDECFILVDV (212 aa)) folds into the PPM-type phosphatase domain.

Mn(2+) is required as a cofactor.

It carries out the reaction O-phospho-L-serine + H2O = L-serine + phosphate. The enzyme catalyses O-phospho-D-serine + H2O = D-serine + phosphate. In terms of biological role, positive regulator of sigma-B activity. Dephosphorylates RsbV in response to energy stress. This is Phosphoserine phosphatase RsbP (rsbP) from Bacillus subtilis (strain 168).